The sequence spans 660 residues: MKTVVFAYHDMGCLGIEALLAAGYEISAIFTHTDNPGEKAFYGSVARLAAERGIPVYAPDDVNHPLWVERIAQLSPDVIFSFYYRHLICDEILQLAPAGAFNLHGSLLTKYRGRAPLNWVLVNGETETGVTLHRMVTRADAGAIVAQLRVAIAPDDIAITLHHKLCHAARQLLEQTLPAIKHGNILEIAQRENEATCFGRRTPDDSFLEWHKPASVLHNMVRAVADPWPGAFSYVGNQKFTVWSSRVHPHASKAQPGSVISVAPLLIACGDGALEIVTGQASDGITMQGSQLAQTLGLVQGSRLNSQPACAARRRTRVLILGVNGFIGNHLTERLLREDHYEVYGLDIGSDAISRFLNHPHFHFVEGDISIHSEWIEYHVKKCDVVLPLVAIATPIEYTRNPLRVFELDFEENLRIIRYCVKYRKRIIFPSTSEVYGMCSDKYFDEDHSNLIVGPVNKPRWIYSVSKQLLDRVIWAYGEKEGLQFTLFRPFNWMGPRLDNLNAARIGSSRAITQLILNLVEGSPIKLIDGGKQKRCFTDIRDGIEALYRIIENAGNRCDGEIINIGNPENEASIEELGEMLLASFEKHPLRHHFPPFAGFRVVESSSYYGKGYQDVEHRKPSIRNAHRCLDWEPKIDMQETIDETLDFFLRTVDLTDKPS.

A formyltransferase ArnAFT region spans residues 1–304 (MKTVVFAYHD…TLGLVQGSRL (304 aa)). 86-88 (HLI) serves as a coordination point for (6R)-10-formyltetrahydrofolate. Residue His104 is the Proton donor; for formyltransferase activity of the active site. (6R)-10-formyltetrahydrofolate contacts are provided by residues Arg114 and 136–140 (VTRAD). The tract at residues 314 to 660 (RRTRVLILGV…RTVDLTDKPS (347 aa)) is dehydrogenase ArnADH. NAD(+) contacts are provided by residues Asp347 and 368–369 (DI). UDP-alpha-D-glucuronate contacts are provided by residues Ala393, Tyr398, and 432-433 (TS). The Proton acceptor; for decarboxylase activity role is filled by Glu434. Residues Arg460, Asn492, 526 to 535 (KLIDGGKQKR), and Tyr613 contribute to the UDP-alpha-D-glucuronate site. The active-site Proton donor; for decarboxylase activity is Arg619.

It in the N-terminal section; belongs to the Fmt family. UDP-L-Ara4N formyltransferase subfamily. The protein in the C-terminal section; belongs to the NAD(P)-dependent epimerase/dehydratase family. UDP-glucuronic acid decarboxylase subfamily. As to quaternary structure, homohexamer, formed by a dimer of trimers.

It carries out the reaction UDP-alpha-D-glucuronate + NAD(+) = UDP-beta-L-threo-pentopyranos-4-ulose + CO2 + NADH. The enzyme catalyses UDP-4-amino-4-deoxy-beta-L-arabinose + (6R)-10-formyltetrahydrofolate = UDP-4-deoxy-4-formamido-beta-L-arabinose + (6S)-5,6,7,8-tetrahydrofolate + H(+). Its pathway is nucleotide-sugar biosynthesis; UDP-4-deoxy-4-formamido-beta-L-arabinose biosynthesis; UDP-4-deoxy-4-formamido-beta-L-arabinose from UDP-alpha-D-glucuronate: step 1/3. The protein operates within nucleotide-sugar biosynthesis; UDP-4-deoxy-4-formamido-beta-L-arabinose biosynthesis; UDP-4-deoxy-4-formamido-beta-L-arabinose from UDP-alpha-D-glucuronate: step 3/3. It participates in bacterial outer membrane biogenesis; lipopolysaccharide biosynthesis. Functionally, bifunctional enzyme that catalyzes the oxidative decarboxylation of UDP-glucuronic acid (UDP-GlcUA) to UDP-4-keto-arabinose (UDP-Ara4O) and the addition of a formyl group to UDP-4-amino-4-deoxy-L-arabinose (UDP-L-Ara4N) to form UDP-L-4-formamido-arabinose (UDP-L-Ara4FN). The modified arabinose is attached to lipid A and is required for resistance to polymyxin and cationic antimicrobial peptides. This Shigella dysenteriae serotype 1 (strain Sd197) protein is Bifunctional polymyxin resistance protein ArnA.